A 247-amino-acid chain; its full sequence is ATP synthase subunit a, chloroplastic (247 aa).

Transmembrane regions (helical) follow at residues 38–58 (QVLI…TLAV), 95–115 (VPFI…GALL), 134–154 (INTT…AGLT), 199–219 (LVVV…VMFL), and 220–240 (GLFT…AYIG).

Belongs to the ATPase A chain family. In terms of assembly, F-type ATPases have 2 components, CF(1) - the catalytic core - and CF(0) - the membrane proton channel. CF(1) has five subunits: alpha(3), beta(3), gamma(1), delta(1), epsilon(1). CF(0) has four main subunits: a, b, b' and c.

It localises to the plastid. It is found in the chloroplast thylakoid membrane. Functionally, key component of the proton channel; it plays a direct role in the translocation of protons across the membrane. The sequence is that of ATP synthase subunit a, chloroplastic from Vitis vinifera (Grape).